Reading from the N-terminus, the 474-residue chain is Glycogen synthase (474 aa).

K15 serves as a coordination point for ADP-alpha-D-glucose.

The protein belongs to the glycosyltransferase 1 family. Bacterial/plant glycogen synthase subfamily.

The catalysed reaction is [(1-&gt;4)-alpha-D-glucosyl](n) + ADP-alpha-D-glucose = [(1-&gt;4)-alpha-D-glucosyl](n+1) + ADP + H(+). It participates in glycan biosynthesis; glycogen biosynthesis. Functionally, synthesizes alpha-1,4-glucan chains using ADP-glucose. This is Glycogen synthase from Chlamydia trachomatis serovar L2b (strain UCH-1/proctitis).